A 372-amino-acid polypeptide reads, in one-letter code: L-selectin (372 aa).

Residues 1 to 28 form the signal peptide; it reads MIFPWKCQSTQRDLCNIFKLWGWTMLCC. A propeptide spanning residues 29 to 38 is cleaved from the precursor; the sequence is DFLAHHGTDC. At 39–332 the chain is on the extracellular side; the sequence is WTYHYSEKPM…FSMIKEGDYN (294 aa). Positions 55–155 constitute a C-type lectin domain; the sequence is RFCRENYTDL…ACHKLKAALC (101 aa). Intrachain disulfides connect Cys57–Cys155, Cys128–Cys147, Cys128–Cys160, Cys160–Cys171, Cys165–Cys180, Cys182–Cys191, Cys197–Cys241, Cys227–Cys254, Cys259–Cys303, and Cys289–Cys316. Asn60 and Asn104 each carry an N-linked (GlcNAc...) asparagine glycan. Ca(2+) contacts are provided by Glu118, Asn120, Glu126, Asn143, and Asp144. An EGF-like domain is found at 156–192; that stretch reads YTASCQPWSCSGHGECVEIINNYTCNCDVGYYGPQCQ. N-linked (GlcNAc...) asparagine glycosylation is present at Asn177. 2 consecutive Sushi domains span residues 195–256 and 257–318; these read IQCE…TCQV and IQCE…ICQK. N-linked (GlcNAc...) asparagine glycosylation is found at Asn216, Asn226, Asn232, Asn246, and Asn271. The helical transmembrane segment at 333 to 355 threads the bilayer; it reads PLFIPVAVMVTAFSGLAFIIWLA. Topologically, residues 356-372 are cytoplasmic; the sequence is RRLKKGKKSKKSMDDPY.

The protein belongs to the selectin/LECAM family. Interaction with SELPLG/PSGL1 and PODXL2 is required for promoting recruitment and rolling of leukocytes. This interaction is dependent on the sialyl Lewis X glycan modification of SELPLG and PODXL2, and tyrosine sulfation modifications of SELPLG. Sulfation on 'Tyr-51' of SELPLG is important for L-selectin binding. N-glycosylated.

It localises to the cell membrane. Functionally, calcium-dependent lectin that mediates cell adhesion by binding to glycoproteins on neighboring cells. Mediates the adherence of lymphocytes to endothelial cells of high endothelial venules in peripheral lymph nodes. Promotes initial tethering and rolling of leukocytes in endothelia. The sequence is that of L-selectin (SELL) from Pongo pygmaeus (Bornean orangutan).